The primary structure comprises 279 residues: Putative potassium channel regulatory protein (279 aa).

One can recognise a BTB domain in the interval Glu5–Ser74. A disordered region spans residues Glu256 to Arg279.

It is found in the endoplasmic reticulum. Functionally, inhibits potassium fluxes in cells, possibly by retaining potassium channels in the cytoplasm. The sequence is that of Putative potassium channel regulatory protein (kcnrg) from Xenopus tropicalis (Western clawed frog).